The primary structure comprises 160 residues: UPF0260 protein GDI1595/Gdia_1801 (160 aa).

It belongs to the UPF0260 family.

The protein is UPF0260 protein GDI1595/Gdia_1801 of Gluconacetobacter diazotrophicus (strain ATCC 49037 / DSM 5601 / CCUG 37298 / CIP 103539 / LMG 7603 / PAl5).